The chain runs to 527 residues: Estrogen receptor beta (527 aa).

The interval 1-145 (MDVKNSPSSL…SPSSKRDAHF (145 aa)) is modulating. Residues Ser-84 and Ser-102 each carry the phosphoserine; by MAPK modification. NR C4-type zinc fingers lie at residues 146–166 (CAVC…CEGC) and 182–206 (CPAT…LRKC). The nuclear receptor DNA-binding region spans 146 to 211 (CAVCSDYASG…RLRKCYEVGM (66 aa)). An NR LBD domain is found at 261–495 (SPEQLVLTLL…DLLLEMLNAH (235 aa)). Residues 505–527 (TRSERNLAEDSESKEGSQKPQAQ) are disordered. A compositionally biased stretch (basic and acidic residues) spans 506-521 (RSERNLAEDSESKEGS).

This sequence belongs to the nuclear hormone receptor family. NR3 subfamily. As to quaternary structure, binds DNA as a homodimer. Can form a heterodimer with ESR1. Interacts with NCOA1, NCOA3, NCOA5 and NCOA6 coactivators, leading to a strong increase of transcription of target genes. Interacts with UBE1C and AKAP13. Interacts with DNTTIP2. Interacts with CCDC62 in the presence of estradiol/E2; this interaction seems to enhance the transcription of target genes. Interacts with DNAAF4. Interacts with PRMT2. Interacts with CCAR2 (via N-terminus) in a ligand-independent manner. Interacts with RBM39, in the presence of estradiol (E2). Interacts with STUB1/CHIP. Post-translationally, phosphorylation at Ser-84 and Ser-102 recruits NCOA1.

It is found in the nucleus. Its function is as follows. Nuclear hormone receptor. Binds estrogens with an affinity similar to that of ESR1/ER-alpha, and activates expression of reporter genes containing estrogen response elements (ERE) in an estrogen-dependent manner. The sequence is that of Estrogen receptor beta (ESR2) from Ovis aries (Sheep).